The primary structure comprises 301 residues: E3 ubiquitin-protein ligase RNF144B (301 aa).

Residues 26–242 (PLVTCKLCLC…YDKGPCRNKL (217 aa)) are TRIAD supradomain. Residues Cys-30, Cys-33, Cys-53, Cys-56, Cys-121, Cys-126, Cys-145, Cys-148, Cys-153, Cys-156, His-161, Cys-166, Cys-191, and Cys-194 each coordinate Zn(2+). The RING-type 1 zinc finger occupies 30-80 (CKLCLCEQSLDKMTMLQECQCIFCTPCLKQYMVLSIREGCGSPITCPDMVC). The IBR-type zinc-finger motif lies at 101–166 (QLYQRLKFER…KDAWHEESSC (66 aa)). The RING-type 2; atypical zinc-finger motif lies at 191-220 (CPVCRIYIERNEGCAQMMCKNCKHTFCWYC). The active site involves Cys-204. Residues Cys-209, Cys-212, Cys-217, Cys-220, His-232, and Cys-238 each contribute to the Zn(2+) site. The helical transmembrane segment at 256 to 276 (VVGILVGLGVIALVTSPLLLL) threads the bilayer.

It belongs to the RBR family. RNF144 subfamily. In terms of assembly, interacts with UBE2L3, UBE2L6 and LCMT2, as well as with BAX. Interacts with TBK1; this interaction inhibits TBK1 phosphorylation and 'Lys-63'-linked polyubiquitination. Post-translationally, auto-ubiquitinated.

It localises to the mitochondrion membrane. Its subcellular location is the cytoplasm. It carries out the reaction [E2 ubiquitin-conjugating enzyme]-S-ubiquitinyl-L-cysteine + [acceptor protein]-L-lysine = [E2 ubiquitin-conjugating enzyme]-L-cysteine + [acceptor protein]-N(6)-ubiquitinyl-L-lysine.. The protein operates within protein modification; protein ubiquitination. E3 ubiquitin-protein ligase which accepts ubiquitin from E2 ubiquitin-conjugating enzymes UBE2L3 and UBE2L6 in the form of a thioester and then directly transfers the ubiquitin to targeted substrates such as LCMT2, thereby promoting their degradation. Induces apoptosis via a p53/TP53-dependent but caspase-independent mechanism. Plays a crucial role in maintaining the genomic stability by controlling the degradation of multiple proteins involved in mitotic progression and DNA damage. Regulates epithelial homeostasis by mediating degradation of CDKN1A and isoform 2 of TP63. Plays a regulatory role in innate immunity by negatively regulating IRF3 activation and IFN-beta production. Mechanistically, inhibits TBK1 phosphorylation and 'Lys-63'-linked polyubiquitination independently of its E3 ligase activity. Alternatively, promotes 'Lys-27' and 'Lys-33'-linked ubiquitination of IFIH1/MDA5, promoting selective autophagic degradation of IFIH1/MDA5 to inhibit antiviral response. The sequence is that of E3 ubiquitin-protein ligase RNF144B (Rnf144b) from Mus musculus (Mouse).